The chain runs to 330 residues: D-cysteine desulfhydrase (330 aa).

An N6-(pyridoxal phosphate)lysine modification is found at Lys52.

It belongs to the ACC deaminase/D-cysteine desulfhydrase family. As to quaternary structure, homodimer. Requires pyridoxal 5'-phosphate as cofactor.

It carries out the reaction D-cysteine + H2O = hydrogen sulfide + pyruvate + NH4(+) + H(+). Catalyzes the alpha,beta-elimination reaction of D-cysteine and of several D-cysteine derivatives. It could be a defense mechanism against D-cysteine. The sequence is that of D-cysteine desulfhydrase from Yersinia enterocolitica serotype O:8 / biotype 1B (strain NCTC 13174 / 8081).